The primary structure comprises 93 residues: Acylphosphatase (93 aa).

The region spanning Arg6–His93 is the Acylphosphatase-like domain. Residues Arg21 and Asn39 contribute to the active site.

Belongs to the acylphosphatase family.

It carries out the reaction an acyl phosphate + H2O = a carboxylate + phosphate + H(+). This is Acylphosphatase (acyP) from Anaeromyxobacter sp. (strain Fw109-5).